The sequence spans 82 residues: Small ribosomal subunit protein bS18 (82 aa).

The protein belongs to the bacterial ribosomal protein bS18 family. As to quaternary structure, part of the 30S ribosomal subunit. Forms a tight heterodimer with protein bS6.

Its function is as follows. Binds as a heterodimer with protein bS6 to the central domain of the 16S rRNA, where it helps stabilize the platform of the 30S subunit. The polypeptide is Small ribosomal subunit protein bS18 (Bifidobacterium longum (strain NCC 2705)).